The sequence spans 347 residues: UDP-N-acetylenolpyruvoylglucosamine reductase (347 aa).

The 172-residue stretch at 24 to 195 (FDARARVAAR…VAVTFRLPKA (172 aa)) folds into the FAD-binding PCMH-type domain. The active site involves R171. S247 (proton donor) is an active-site residue. The active site involves E343.

This sequence belongs to the MurB family. Requires FAD as cofactor.

It is found in the cytoplasm. The catalysed reaction is UDP-N-acetyl-alpha-D-muramate + NADP(+) = UDP-N-acetyl-3-O-(1-carboxyvinyl)-alpha-D-glucosamine + NADPH + H(+). It participates in cell wall biogenesis; peptidoglycan biosynthesis. In terms of biological role, cell wall formation. This chain is UDP-N-acetylenolpyruvoylglucosamine reductase, found in Burkholderia pseudomallei (strain 668).